A 167-amino-acid polypeptide reads, in one-letter code: RNA pyrophosphohydrolase (167 aa).

Residues 8-159 form the Nudix hydrolase domain; the sequence is PYRTCVGVML…KRPVYERVVK (152 aa). Positions 47-68 match the Nudix box motif; that stretch reads GGVDPGEDTWAAAKRELYEETS.

It belongs to the Nudix hydrolase family. RppH subfamily. Requires a divalent metal cation as cofactor.

Functionally, accelerates the degradation of transcripts by removing pyrophosphate from the 5'-end of triphosphorylated RNA, leading to a more labile monophosphorylated state that can stimulate subsequent ribonuclease cleavage. The protein is RNA pyrophosphohydrolase of Bradyrhizobium diazoefficiens (strain JCM 10833 / BCRC 13528 / IAM 13628 / NBRC 14792 / USDA 110).